Here is a 79-residue protein sequence, read N- to C-terminus: MGSLSIWHWIVVIAVVLLLFGRGKISDLMGDVAQGIKSFKKGLQDDEKTAEKPDAVKSLDHNATTGTPPNRTDVGSKAV.

A helical transmembrane segment spans residues 1–21 (MGSLSIWHWIVVIAVVLLLFG). Residues 42-60 (GLQDDEKTAEKPDAVKSLD) show a composition bias toward basic and acidic residues. The disordered stretch occupies residues 42–79 (GLQDDEKTAEKPDAVKSLDHNATTGTPPNRTDVGSKAV). Polar residues predominate over residues 61-70 (HNATTGTPPN).

Belongs to the TatA/E family. In terms of assembly, the Tat system comprises two distinct complexes: a TatABC complex, containing multiple copies of TatA, TatB and TatC subunits, and a separate TatA complex, containing only TatA subunits. Substrates initially bind to the TatABC complex, which probably triggers association of the separate TatA complex to form the active translocon.

The protein localises to the cell inner membrane. Part of the twin-arginine translocation (Tat) system that transports large folded proteins containing a characteristic twin-arginine motif in their signal peptide across membranes. TatA could form the protein-conducting channel of the Tat system. The protein is Sec-independent protein translocase protein TatA of Rhodopseudomonas palustris (strain HaA2).